Reading from the N-terminus, the 325-residue chain is Protein FAM50B (325 aa).

Ala-2 carries the post-translational modification N-acetylalanine. 2 disordered regions span residues 92–111 (QHLEEQRLQQERQREQEQRR) and 137–160 (RRAGNLGKNPDVDTSFLPDRDREE).

The protein belongs to the FAM50 family. As to expression, widely expressed. Mostly abundant in testis and adult and fetal brain.

This Homo sapiens (Human) protein is Protein FAM50B (FAM50B).